We begin with the raw amino-acid sequence, 307 residues long: Phospho-N-acetylmuramoyl-pentapeptide-transferase (307 aa).

The next 10 helical transmembrane spans lie at 3-23 (IILFTSLVAFFVFLLILKYWI), 47-67 (SGTPVMGGIIFLIVSIPFLFF), 71-91 (FFPSLSTILFGLLGLLDDFKL), 105-125 (IFLSFIITLLLYIFSFHDYKI), 137-157 (IFYVILFFVVFIAVPNAINLT), 162-182 (GLAGGTSLITLFFFLIYNFQF), 186-206 (LTLEISLMITALIAFLWFNSH), 210-230 (IFMGDVGAFALGGFIASLSII), 237-257 (LVFLGGIFLIESLSVFIQVFF), and 285-305 (VVWRFYIIHLIMMIGGIILWN).

The protein belongs to the glycosyltransferase 4 family. MraY subfamily. Mg(2+) serves as cofactor.

It localises to the cell inner membrane. It catalyses the reaction UDP-N-acetyl-alpha-D-muramoyl-L-alanyl-gamma-D-glutamyl-meso-2,6-diaminopimeloyl-D-alanyl-D-alanine + di-trans,octa-cis-undecaprenyl phosphate = di-trans,octa-cis-undecaprenyl diphospho-N-acetyl-alpha-D-muramoyl-L-alanyl-D-glutamyl-meso-2,6-diaminopimeloyl-D-alanyl-D-alanine + UMP. It functions in the pathway cell wall biogenesis; peptidoglycan biosynthesis. Catalyzes the initial step of the lipid cycle reactions in the biosynthesis of the cell wall peptidoglycan: transfers peptidoglycan precursor phospho-MurNAc-pentapeptide from UDP-MurNAc-pentapeptide onto the lipid carrier undecaprenyl phosphate, yielding undecaprenyl-pyrophosphoryl-MurNAc-pentapeptide, known as lipid I. This Dictyoglomus turgidum (strain DSM 6724 / Z-1310) protein is Phospho-N-acetylmuramoyl-pentapeptide-transferase.